We begin with the raw amino-acid sequence, 291 residues long: tRNA-uridine aminocarboxypropyltransferase 1 (291 aa).

Residues 158-181 (KNSAYEPSSKRPKFSPENDKNTYE) form a disordered region. Positions 171–181 (FSPENDKNTYE) are enriched in basic and acidic residues. The short motif at 199–202 (DSTW) is the DXTW element.

This sequence belongs to the TDD superfamily. DTWD1 family.

The protein resides in the nucleus. It carries out the reaction a uridine in tRNA + S-adenosyl-L-methionine = a 3-[(3S)-3-amino-3-carboxypropyl]uridine in tRNA + S-methyl-5'-thioadenosine + H(+). Its function is as follows. Catalyzes the formation of 3-(3-amino-3-carboxypropyl)uridine (acp3U) at position 20 in the D-loop of several cytoplasmic tRNAs (acp3U(20)). This chain is tRNA-uridine aminocarboxypropyltransferase 1, found in Xenopus laevis (African clawed frog).